The following is an 840-amino-acid chain: Leucine--tRNA ligase (840 aa).

The 'HIGH' region signature appears at 44-55; that stretch reads PYPSANGLHVGH. The 'KMSKS' region motif lies at 617–621; that stretch reads KMSKS. K620 lines the ATP pocket.

Belongs to the class-I aminoacyl-tRNA synthetase family.

The protein resides in the cytoplasm. It carries out the reaction tRNA(Leu) + L-leucine + ATP = L-leucyl-tRNA(Leu) + AMP + diphosphate. The polypeptide is Leucine--tRNA ligase (Borreliella burgdorferi (strain ATCC 35210 / DSM 4680 / CIP 102532 / B31) (Borrelia burgdorferi)).